The primary structure comprises 222 residues: Octanoyltransferase (222 aa).

One can recognise a BPL/LPL catalytic domain in the interval 35–210 (ETTPDELWLV…EFVHLLGYPK (176 aa)). Residues 74–81 (RGGQVTYH), 141–143 (SLG), and 154–156 (GLA) each bind substrate. The active-site Acyl-thioester intermediate is the Cys-172.

This sequence belongs to the LipB family.

It is found in the cytoplasm. It catalyses the reaction octanoyl-[ACP] + L-lysyl-[protein] = N(6)-octanoyl-L-lysyl-[protein] + holo-[ACP] + H(+). The protein operates within protein modification; protein lipoylation via endogenous pathway; protein N(6)-(lipoyl)lysine from octanoyl-[acyl-carrier-protein]: step 1/2. Functionally, catalyzes the transfer of endogenously produced octanoic acid from octanoyl-acyl-carrier-protein onto the lipoyl domains of lipoate-dependent enzymes. Lipoyl-ACP can also act as a substrate although octanoyl-ACP is likely to be the physiological substrate. The sequence is that of Octanoyltransferase from Serratia proteamaculans (strain 568).